The following is a 373-amino-acid chain: tRNA-specific 2-thiouridylase MnmA (373 aa).

Residues 7–14 (AMSGGVDS) and L33 each bind ATP. C101 functions as the Nucleophile in the catalytic mechanism. C101 and C215 form a disulfide bridge. G125 is an ATP binding site. Residues 165–167 (KDQ) form an interaction with tRNA region. C215 serves as the catalytic Cysteine persulfide intermediate.

The protein belongs to the MnmA/TRMU family.

It is found in the cytoplasm. It catalyses the reaction S-sulfanyl-L-cysteinyl-[protein] + uridine(34) in tRNA + AH2 + ATP = 2-thiouridine(34) in tRNA + L-cysteinyl-[protein] + A + AMP + diphosphate + H(+). In terms of biological role, catalyzes the 2-thiolation of uridine at the wobble position (U34) of tRNA, leading to the formation of s(2)U34. The polypeptide is tRNA-specific 2-thiouridylase MnmA (Roseiflexus sp. (strain RS-1)).